The sequence spans 460 residues: Armadillo repeat-containing protein LFR (460 aa).

The segment covering 1–10 (MSHVRSAPAG) has biased composition (low complexity). The tract at residues 1–32 (MSHVRSAPAGKSGGGGGSTPAKRGRPFGSTTG) is disordered. ARM repeat units lie at residues 225 to 267 (ENET…NLAP), 321 to 360 (NEPF…NVAE), and 364 to 405 (DFRL…SLVS).

In terms of assembly, interacts with CHR719, SWI3A and SWI3C. In terms of tissue distribution, expressed at low levels in coleoptiles, leaf tongues, mature leaves and nodes during the vegetative phase. Highly expressed in reproductive tissues such as young panicles, early developing seeds, embryos and endosperms.

It is found in the nucleus. Plays critical roles in both embryo and endosperm development. Required for free nuclei division and cellularization in early endosperm development, by preventing premature cell death in the endosperm. Involved in the regulation of pattern formation and organ differentiation during embryogenesis, by regulating genes involved in the early stages of seed development. This is Armadillo repeat-containing protein LFR from Oryza sativa subsp. japonica (Rice).